The following is a 657-amino-acid chain: MLELTSEFKPSPDQQEAIKGIVKSIKKGNKYQTLLGVTGSGKTFTMANVIKELNIPTLIMSHNKSLCAQLYSEFKGFFSKNHVEYFISYYDYYQPEAYIPRTDVFIEKDSSTNEDLERLRLSATASLLSYEDVVCIASVSANYGLGNPNEYIGMVLIFELGMQISQKELLKKLVDMGYKRNDNFFDRADFRVQGDIIDIYPAYYEDEVVRLEFFGDELDAMYHYNVLENKKGKDLKRFILYPTSQFSVGETRLKQAIKDIKAELNERLAYFEHENKLVEYQRLKQRVEFDLEMLTSTGMCKGVENYARHLTGLKEGDTPYTLFDYFAIKDRKFLVIVDESHVSLPQFRGMFAGDRSRKQTLVDYGFRLPSALDNRPLMFDEFIHKNCQFLFVSATPAPLELELSKENIFHQIMRPTGLLDPLIELKDSDNQVEILFDEAKKVIQRNERVLVTVLTKKLAEELTRYYLELGIKVKYMHSDIDAIERNEIIRGLRSGAFDMLIGINLLREGLDLPEVSLIAIMDADKEGFLRSTTSLIQTMGRAARNVNGKVLLFCKKITKSMQEAMDTTNERRKLQMAYNKKYNITPTSVKRHIEESLKNEEDLGEIYRKGKKLEKMPASERAKLVKELRKQMLEAAKALEFEKAAAIRDEINKLRDL.

One can recognise a Helicase ATP-binding domain in the interval 23–414; it reads KSIKKGNKYQ…KENIFHQIMR (392 aa). 36 to 43 is a binding site for ATP; the sequence is GVTGSGKT. The Beta-hairpin signature appears at 89 to 112; sequence YYDYYQPEAYIPRTDVFIEKDSST. One can recognise a Helicase C-terminal domain in the interval 431-593; the sequence is QVEILFDEAK…ITPTSVKRHI (163 aa). The 36-residue stretch at 622–657 folds into the UVR domain; the sequence is AKLVKELRKQMLEAAKALEFEKAAAIRDEINKLRDL.

This sequence belongs to the UvrB family. As to quaternary structure, forms a heterotetramer with UvrA during the search for lesions. Interacts with UvrC in an incision complex.

It is found in the cytoplasm. Its function is as follows. The UvrABC repair system catalyzes the recognition and processing of DNA lesions. A damage recognition complex composed of 2 UvrA and 2 UvrB subunits scans DNA for abnormalities. Upon binding of the UvrA(2)B(2) complex to a putative damaged site, the DNA wraps around one UvrB monomer. DNA wrap is dependent on ATP binding by UvrB and probably causes local melting of the DNA helix, facilitating insertion of UvrB beta-hairpin between the DNA strands. Then UvrB probes one DNA strand for the presence of a lesion. If a lesion is found the UvrA subunits dissociate and the UvrB-DNA preincision complex is formed. This complex is subsequently bound by UvrC and the second UvrB is released. If no lesion is found, the DNA wraps around the other UvrB subunit that will check the other stand for damage. This Campylobacter jejuni subsp. jejuni serotype O:2 (strain ATCC 700819 / NCTC 11168) protein is UvrABC system protein B.